Consider the following 360-residue polypeptide: Peptide chain release factor 1 (360 aa).

The residue at position 236 (Q236) is an N5-methylglutamine.

Belongs to the prokaryotic/mitochondrial release factor family. In terms of processing, methylated by PrmC. Methylation increases the termination efficiency of RF1.

The protein resides in the cytoplasm. In terms of biological role, peptide chain release factor 1 directs the termination of translation in response to the peptide chain termination codons UAG and UAA. The polypeptide is Peptide chain release factor 1 (Ligilactobacillus salivarius (strain UCC118) (Lactobacillus salivarius)).